A 149-amino-acid chain; its full sequence is D-aminoacyl-tRNA deacylase (149 aa).

Residues 137 to 138 carry the Gly-cisPro motif, important for rejection of L-amino acids motif; sequence GP.

It belongs to the DTD family. Homodimer.

It localises to the cytoplasm. The enzyme catalyses glycyl-tRNA(Ala) + H2O = tRNA(Ala) + glycine + H(+). The catalysed reaction is a D-aminoacyl-tRNA + H2O = a tRNA + a D-alpha-amino acid + H(+). Functionally, an aminoacyl-tRNA editing enzyme that deacylates mischarged D-aminoacyl-tRNAs. Also deacylates mischarged glycyl-tRNA(Ala), protecting cells against glycine mischarging by AlaRS. Acts via tRNA-based rather than protein-based catalysis; rejects L-amino acids rather than detecting D-amino acids in the active site. By recycling D-aminoacyl-tRNA to D-amino acids and free tRNA molecules, this enzyme counteracts the toxicity associated with the formation of D-aminoacyl-tRNA entities in vivo and helps enforce protein L-homochirality. The chain is D-aminoacyl-tRNA deacylase from Clostridium acetobutylicum (strain ATCC 824 / DSM 792 / JCM 1419 / IAM 19013 / LMG 5710 / NBRC 13948 / NRRL B-527 / VKM B-1787 / 2291 / W).